A 107-amino-acid chain; its full sequence is Guanine nucleotide-binding protein G(I)/G(S)/G(O) subunit gamma-14 (107 aa).

Residues 69–107 form the G protein gamma domain; sequence KMAADLLKFCTEQAKNDPFLVGIPAATNSFKEKKPYAIL.

Belongs to the G protein gamma family. In terms of assembly, g proteins are composed of 3 units; alpha, beta and gamma.

Its subcellular location is the cell membrane. Guanine nucleotide-binding proteins (G proteins) are involved as a modulator or transducer in various transmembrane signaling systems. The beta and gamma chains are required for the GTPase activity, for replacement of GDP by GTP, and for G protein-effector interaction. This Homo sapiens (Human) protein is Guanine nucleotide-binding protein G(I)/G(S)/G(O) subunit gamma-14.